The chain runs to 257 residues: Pyridoxine 5'-phosphate synthase (257 aa).

Asn-6 is a binding site for 3-amino-2-oxopropyl phosphate. Residue 8–9 (DH) participates in 1-deoxy-D-xylulose 5-phosphate binding. Arg-17 serves as a coordination point for 3-amino-2-oxopropyl phosphate. Residue His-42 is the Proton acceptor of the active site. Residues Arg-44 and His-49 each coordinate 1-deoxy-D-xylulose 5-phosphate. Catalysis depends on Glu-69, which acts as the Proton acceptor. A 1-deoxy-D-xylulose 5-phosphate-binding site is contributed by Thr-99. His-211 serves as the catalytic Proton donor. Residues Gly-212 and 233–234 (GQ) contribute to the 3-amino-2-oxopropyl phosphate site.

The protein belongs to the PNP synthase family. As to quaternary structure, homooctamer; tetramer of dimers.

It localises to the cytoplasm. The enzyme catalyses 3-amino-2-oxopropyl phosphate + 1-deoxy-D-xylulose 5-phosphate = pyridoxine 5'-phosphate + phosphate + 2 H2O + H(+). It functions in the pathway cofactor biosynthesis; pyridoxine 5'-phosphate biosynthesis; pyridoxine 5'-phosphate from D-erythrose 4-phosphate: step 5/5. Functionally, catalyzes the complicated ring closure reaction between the two acyclic compounds 1-deoxy-D-xylulose-5-phosphate (DXP) and 3-amino-2-oxopropyl phosphate (1-amino-acetone-3-phosphate or AAP) to form pyridoxine 5'-phosphate (PNP) and inorganic phosphate. The chain is Pyridoxine 5'-phosphate synthase from Campylobacter fetus subsp. fetus (strain 82-40).